Here is a 428-residue protein sequence, read N- to C-terminus: Serine hydroxymethyltransferase (428 aa).

Residues Leu-117 and Gly-121 to Leu-123 each bind (6S)-5,6,7,8-tetrahydrofolate. The residue at position 226 (Lys-226) is an N6-(pyridoxal phosphate)lysine.

It belongs to the SHMT family. As to quaternary structure, homodimer. It depends on pyridoxal 5'-phosphate as a cofactor.

The protein resides in the cytoplasm. The enzyme catalyses (6R)-5,10-methylene-5,6,7,8-tetrahydrofolate + glycine + H2O = (6S)-5,6,7,8-tetrahydrofolate + L-serine. It participates in one-carbon metabolism; tetrahydrofolate interconversion. The protein operates within amino-acid biosynthesis; glycine biosynthesis; glycine from L-serine: step 1/1. Functionally, catalyzes the reversible interconversion of serine and glycine with tetrahydrofolate (THF) serving as the one-carbon carrier. This reaction serves as the major source of one-carbon groups required for the biosynthesis of purines, thymidylate, methionine, and other important biomolecules. Also exhibits THF-independent aldolase activity toward beta-hydroxyamino acids, producing glycine and aldehydes, via a retro-aldol mechanism. This Aquifex aeolicus (strain VF5) protein is Serine hydroxymethyltransferase.